Reading from the N-terminus, the 952-residue chain is Chaperone protein ClpC2, chloroplastic (952 aa).

The N-terminal 45 residues, 1–45 (MAWSIALLTPPFFGPGRHVQAKEYREPRGCVMKMSSLKAPVLRIQ), are a transit peptide targeting the chloroplast. In terms of domain architecture, Clp R spans 115–257 (FERFTEKAIK…RTQVIRMVGE (143 aa)). 2 repeat regions span residues 118–183 (FTEK…IGRG) and 193–257 (FTPR…MVGE). Residues 278 to 525 (LEEYGTNLTK…RVRLRHAQLP (248 aa)) are i. 323–330 (GEPGVGKT) contributes to the ATP binding site. The UVR domain occupies 532–567 (EKQLRQITKEKNEAVRSQDFEMAGSHRDREIELKAE). Residues 592-783 (VTESDIQHIV…LLIMTSNVGS (192 aa)) are II. Residue 666–673 (GPTGVGKS) coordinates ATP.

This sequence belongs to the ClpA/ClpB family. ClpC subfamily. Homodimer and homohexamer. Hexamerization upon addition of ATP. Interacts with CLPT1. Interacts with CLPS1. Stably associated with the import machinery. Interacts with CLPF. The cofactor is Mg(2+). As to expression, expressed at low levels in roots and inflorescences. Expressed at very low levels in rosette leaves. Expressed in photosynthetic green tissues with high levels in young, developing leaf tissues.

It is found in the plastid. The protein resides in the chloroplast stroma. The protein localises to the chloroplast membrane. The catalysed reaction is ATP + H2O = ADP + phosphate + H(+). Functionally, molecular chaperone. May act as a suppressor of FtsH-mediated thylakoid membrane biogenesis and may enhance photoinhibition. Seems not involved in chloroplastic protein import. Probable component of the TIC-associated stromal import motor involved in inner membrane translocation. Has an ATPase activity, but no ADPase activity. Interacts with transit peptides with a positional preference. Localization of the signal sequence at the N-terminal end of a protein seems mandatory for interaction to take place. The chain is Chaperone protein ClpC2, chloroplastic from Arabidopsis thaliana (Mouse-ear cress).